The chain runs to 253 residues: uncharacterized protein (253 aa).

This is an uncharacterized protein from Mycobacterium bovis (strain ATCC BAA-935 / AF2122/97).